A 118-amino-acid polypeptide reads, in one-letter code: MARVKRGVIARKRHKKILKLAKGYYGARSRVFRVAKQAVIKAGQYAYRDRRQKKRQFRALWIARINAGARTNGLSYSRLIAGLKKASIEIDRKVLADLAVNEKAAFAAIVEKAKAVLA.

The protein belongs to the bacterial ribosomal protein bL20 family.

In terms of biological role, binds directly to 23S ribosomal RNA and is necessary for the in vitro assembly process of the 50S ribosomal subunit. It is not involved in the protein synthesizing functions of that subunit. The sequence is that of Large ribosomal subunit protein bL20 from Pseudomonas entomophila (strain L48).